Reading from the N-terminus, the 728-residue chain is Catalase-peroxidase 1 (728 aa).

The segment at residues 91–218 (WHSAGTYRTA…LAAVQMGLIY (128 aa)) is a cross-link (tryptophyl-tyrosyl-methioninium (Trp-Tyr) (with M-244)). The Proton acceptor role is filled by His92. Positions 218–244 (YVNPEGPDGNPDPVAAAHDIRETFARM) form a cross-link, tryptophyl-tyrosyl-methioninium (Tyr-Met) (with W-91). A heme b-binding site is contributed by His259.

Belongs to the peroxidase family. Peroxidase/catalase subfamily. Homodimer or homotetramer. Requires heme b as cofactor. Formation of the three residue Trp-Tyr-Met cross-link is important for the catalase, but not the peroxidase activity of the enzyme.

The enzyme catalyses H2O2 + AH2 = A + 2 H2O. The catalysed reaction is 2 H2O2 = O2 + 2 H2O. Bifunctional enzyme with both catalase and broad-spectrum peroxidase activity. The protein is Catalase-peroxidase 1 of Burkholderia orbicola (strain MC0-3).